A 349-amino-acid polypeptide reads, in one-letter code: Terpene cyclase rstn5 (349 aa).

The next 5 membrane-spanning stretches (helical) occupy residues 4 to 24 (LTPL…WGVF), 81 to 101 (FMVQ…TEGA), 116 to 136 (GLFS…FWFV), 158 to 178 (VVPS…FDPF), and 181 to 201 (GLDL…CISL). N222 carries N-linked (GlcNAc...) asparagine glycosylation. Transmembrane regions (helical) follow at residues 228-248 (VAVG…GLTG), 271-291 (LVLL…LLLA), and 309-329 (TLAV…AWAL).

It belongs to the membrane-bound ascI terpene cyclase family.

Its subcellular location is the membrane. Its pathway is antifungal biosynthesis. In terms of biological role, cyclase; part of the gene cluster that mediates the biosynthesis of the tetrahydropyranyl antifungal agent restricticin that acts as an inhibitor of CYP51 and blocks the ergosterol biosynthesis. The highly reducing polyketide synthase rstn3, the short chain dehydrogenase rstn4, the cyclase rstn5, the FAD-dependent monooxygenase rstn6 and the enoylreductase rstn7 are required to generate the first stable intermediate desmethylrestrictinol. Rstn3 with rstn7 biosynthesize the first polyketide chain intermediate that is reduced by rstn4, followed by epoxidation by rstn6 before 6-endo cyclization via epoxide opening by rstn5 leads to desmethylrestrictinol. The methyltransferase rstn1 then catalyzes the C4 O-methylation of desmethylrestrictinol to produce restrictinol, and the nonribosomal peptide synthetase rstn8 catalyzes the C3 esterification of restrictinol with glycine that leads to restricticin. The protein is Terpene cyclase rstn5 of Aspergillus nomiae NRRL (strain ATCC 15546 / NRRL 13137 / CBS 260.88 / M93).